The following is a 166-amino-acid chain: Disulfide bond formation protein B (166 aa).

The Cytoplasmic portion of the chain corresponds to 1–10 (MGLNITNRQG). Residues 11-27 (FLLVAAACAGAIGFALF) traverse the membrane as a helical segment. Over 28-45 (AQYQLGEEPCPLCILQRI) the chain is Periplasmic. Cysteine 37 and cysteine 40 are joined by a disulfide. Residues 46–62 (GVMAVGALALLAALHNP) traverse the membrane as a helical segment. Residues 63–69 (GKTGAKV) are Cytoplasmic-facing. A helical transmembrane segment spans residues 70 to 86 (WGGLMTLAALSGAGVSL). The Periplasmic portion of the chain corresponds to 87–143 (RQLWLQSLPADQVPQCGPGLEFLMESFPLWEVLSKVLKGSGECAAIQGRFLGMTMPF). Cysteine 102 and cysteine 129 are disulfide-bonded. A helical membrane pass occupies residues 144–162 (WVAVFFAGVIVWTLWLVGR). Residues 163–166 (RRRG) are Cytoplasmic-facing.

Belongs to the DsbB family.

The protein resides in the cell inner membrane. In terms of biological role, required for disulfide bond formation in some periplasmic proteins. Acts by oxidizing the DsbA protein. This Chromobacterium violaceum (strain ATCC 12472 / DSM 30191 / JCM 1249 / CCUG 213 / NBRC 12614 / NCIMB 9131 / NCTC 9757 / MK) protein is Disulfide bond formation protein B.